Here is a 490-residue protein sequence, read N- to C-terminus: MDFYQTSLSQLHDDLVNKKISATELTKETFDHIKGNEDQVKAFISLNEDQALKRAAEIDAKGISADQLTAGVPLAVKDNILTKGLTTTAASKMLENFNPVYDATVVEKLNAADYINVGKTNLDEFAMGSSTENSAFFTTHNPWDLTRVPGGSSGGSAAAVAAGDVLGALGTDTGGSIRMPASFNGVVGMKPTYGRVSRWGIIAFGSSFDQVGWLTQNVKDNALLTALISGNDERDMTSSLKEVPDWAAQLNENTNVKGLRIAVPKEYFDGLDEDVQEVIKAALDHLESLGAIVDEVSLPHTKYGVPAYYILASSEASSNLQRYDGIRYGFRAADVKNLEDVYVRSRSEGFGEEVKRRIMLGTFSLSAGFYDAYFNKAAKVRRLIAQDFEDVFKDHDVIVGATGASTAFKIGAEIDDPQTMYMNDVLTVPVNMAGLPAMSIPAGFSAKNGMPVGLQIIGKAFDEQTVYNTGYVFEQTTDFHKKTPKLGGQN.

Active-site charge relay system residues include Lys77 and Ser152. Ser176 (acyl-ester intermediate) is an active-site residue.

It belongs to the amidase family. GatA subfamily. Heterotrimer of A, B and C subunits.

It carries out the reaction L-glutamyl-tRNA(Gln) + L-glutamine + ATP + H2O = L-glutaminyl-tRNA(Gln) + L-glutamate + ADP + phosphate + H(+). Allows the formation of correctly charged Gln-tRNA(Gln) through the transamidation of misacylated Glu-tRNA(Gln) in organisms which lack glutaminyl-tRNA synthetase. The reaction takes place in the presence of glutamine and ATP through an activated gamma-phospho-Glu-tRNA(Gln). This Limosilactobacillus reuteri (strain DSM 20016) (Lactobacillus reuteri) protein is Glutamyl-tRNA(Gln) amidotransferase subunit A.